We begin with the raw amino-acid sequence, 244 residues long: 5-oxoprolinase subunit A (244 aa).

The protein belongs to the LamB/PxpA family. As to quaternary structure, forms a complex composed of PxpA, PxpB and PxpC.

It catalyses the reaction 5-oxo-L-proline + ATP + 2 H2O = L-glutamate + ADP + phosphate + H(+). Catalyzes the cleavage of 5-oxoproline to form L-glutamate coupled to the hydrolysis of ATP to ADP and inorganic phosphate. In Escherichia coli (strain K12), this protein is 5-oxoprolinase subunit A.